We begin with the raw amino-acid sequence, 686 residues long: Probable metal-nicotianamine transporter YSL4 (686 aa).

14 helical membrane-spanning segments follow: residues 27–47 (WLVT…FCFV), 53–73 (MMTG…FFLL), 96–116 (MFLI…GFAT), 151–171 (FFLI…IMII), 203–223 (VMTI…QWFY), 264–284 (IVNF…YPYL), 308–328 (VFIS…ILVT), 373–393 (IPMF…MVAM), 405–425 (VGVL…ATGL), 441–461 (IFAA…VSGI), 488–508 (AMIA…PCIF), 554–574 (CVEL…LVLV), 596–616 (FFAG…LLLW), and 629–649 (AAVA…SALL).

The protein belongs to the YSL (TC 2.A.67.2) family.

It is found in the membrane. Functionally, may be involved in the transport of nicotianamine-chelated metals. The chain is Probable metal-nicotianamine transporter YSL4 (YSL4) from Oryza sativa subsp. japonica (Rice).